A 178-amino-acid chain; its full sequence is Disulfide bond formation protein B (178 aa).

Over 1–14 (MLSFFKTLSTKRSA) the chain is Cytoplasmic. The helical transmembrane segment at 15-31 (WFLLFSSALLLEAIALY) threads the bilayer. Over 32-49 (FQHGMGLAPCVMCIYERV) the chain is Periplasmic. C41 and C44 are oxidised to a cystine. The helical transmembrane segment at 50–65 (AILGIAFSGLLGLLYP) threads the bilayer. Topologically, residues 66–72 (SSMLLRL) are cytoplasmic. The helical transmembrane segment at 73 to 90 (VALLIGLSSAIKGLMISI) threads the bilayer. Over 91-145 (THLDLQLYPAPWKQCSAVAEFPETLPLDQWFPALFLPSGSCSEVTWQFLGFSMVQ) the chain is Periplasmic. A disulfide bridge connects residues C105 and C131. Residues 146-164 (WIVVIFALYTLLLALIFIS) traverse the membrane as a helical segment. The Cytoplasmic portion of the chain corresponds to 165-177 (QVKRLKPKQRRLF).

The protein belongs to the DsbB family.

The protein resides in the cell inner membrane. In terms of biological role, required for disulfide bond formation in some periplasmic proteins. Acts by oxidizing the DsbA protein. This Pasteurella multocida (strain Pm70) protein is Disulfide bond formation protein B.